Reading from the N-terminus, the 445-residue chain is MSSDADAHKVGLIPVTLMVSGNIMGSGVFLLPANLASTGGIAIYGWLVTIIGALGLSMVYAKMSFLDPSPGGSYAYARRCFGPFLGYQTNVLYWLACWIGNIAMVVIGVGYLSYFFPILKDPLVLTITCVVVLWIFVLLNIVGPKMITRVQAVATVLALIPIVGIAVFGWFWFRGETYMAAWNVSGLGTFGAIQSTLNVTLWSFIGVESASVAAGVVKNPKRNVPIATIGGVLIAAVCYVLSTTAIMGMIPNAALRVSASPFGDAARMALGDTAGAIVSFCAAAGCLGSLGGWTLLAGQTAKAAADDGLFPPIFARVNKAGTPVAGLIIVGILMTIFQLSSISPNATKEFGLVSSVSVIFTLVPYLYTCAALLLLGHGHFGKARPAYLAVTTIAFLYCIWAVVGSGAKEVMWSFVTLMVITAMYALNYNRLHKNPYPLDAPISKD.

The Cytoplasmic segment spans residues 1–12 (MSSDADAHKVGL). The chain crosses the membrane as a helical span at residues 13–24 (IPVTLMVSGNIM). Ile-23, Ser-26, and Gly-27 together coordinate L-arginine. The short motif at 25-27 (GSG) is the Helix-breaking GSG motif TM1 element. Topologically, residues 25 to 42 (GSGVFLLPANLASTGGIA) are periplasmic. A helical transmembrane segment spans residues 43 to 61 (IYGWLVTIIGALGLSMVYA). The Cytoplasmic segment spans residues 62–86 (KMSFLDPSPGGSYAYARRCFGPFLG). The helical transmembrane segment at 87 to 112 (YQTNVLYWLACWIGNIAMVVIGVGYL) threads the bilayer. Ala-96, Cys-97, and Asn-101 together coordinate L-arginine. Residues 113–124 (SYFFPILKDPLV) are Periplasmic-facing. Residues 125–142 (LTITCVVVLWIFVLLNIV) traverse the membrane as a helical segment. A topological domain (cytoplasmic) is located at residue Gly-143. Residues 144–171 (PKMITRVQAVATVLALIPIVGIAVFGWF) form a helical membrane-spanning segment. The Periplasmic portion of the chain corresponds to 172–194 (WFRGETYMAAWNVSGLGTFGAIQ). The helical transmembrane segment at 195-207 (STLNVTLWSFIGV) threads the bilayer. Trp-202 and Ile-205 together coordinate L-arginine. Positions 206–210 (GVESA) match the Helix-breaking GVESA motif TM6 motif. Over 208–226 (ESASVAAGVVKNPKRNVPI) the chain is Cytoplasmic. A helical transmembrane segment spans residues 227–247 (ATIGGVLIAAVCYVLSTTAIM). At 248–277 (GMIPNAALRVSASPFGDAARMALGDTAGAI) the chain is on the periplasmic side. The chain crosses the membrane as a helical span at residues 278–301 (VSFCAAAGCLGSLGGWTLLAGQTA). Position 293 (Trp-293) interacts with L-arginine. Topologically, residues 302–323 (KAAADDGLFPPIFARVNKAGTP) are cytoplasmic. Residues 324 to 340 (VAGLIIVGILMTIFQLS) form a helical membrane-spanning segment. Residues 341–352 (SISPNATKEFGL) are Periplasmic-facing. The helical transmembrane segment at 353 to 370 (VSSVSVIFTLVPYLYTCA) threads the bilayer. Ser-357 is a binding site for L-arginine. At 371-388 (ALLLLGHGHFGKARPAYL) the chain is on the cytoplasmic side. A helical transmembrane segment spans residues 389–404 (AVTTIAFLYCIWAVVG). Topologically, residues 405–407 (SGA) are periplasmic. A helical transmembrane segment spans residues 408–426 (KEVMWSFVTLMVITAMYAL). The Cytoplasmic portion of the chain corresponds to 427-445 (NYNRLHKNPYPLDAPISKD).

The protein belongs to the amino acid-polyamine-organocation (APC) superfamily. Basic amino acid/polyamine antiporter (APA) (TC 2.A.3.2) family. As to quaternary structure, homodimer;each subunit has its own individual transport capacity.

The protein localises to the cell inner membrane. The enzyme catalyses agmatine(in) + L-arginine(out) = agmatine(out) + L-arginine(in). Its function is as follows. Major component of the acid-resistance (AR) system allowing enteric pathogens to survive the acidic environment in the stomach. Exchanges extracellular arginine for its intracellular decarboxylation product agmatine (Agm) thereby expelling intracellular protons. Probably undergoes several conformational states in order to translocate the substrate across the membrane; keeps the substrate accessible to only 1 side of the membrane at a time by opening and closing 3 membrane-internal gates. In Escherichia coli O157:H7, this protein is Arginine/agmatine antiporter (adiC).